Reading from the N-terminus, the 184-residue chain is Muscle-specific protein 20 (184 aa).

The 106-residue stretch at 17-122 (PEMDKEAQEW…NTIFALGRAT (106 aa)) folds into the Calponin-homology (CH) domain. Residues 157–181 (VGLQAGSNKGATQAGQNLGAGRKIL) form a Calponin-like repeat.

Belongs to the calponin family. In terms of tissue distribution, found in synchronous muscle; not found in asynchronous indirect flight muscle.

This is Muscle-specific protein 20 (Mp20) from Drosophila melanogaster (Fruit fly).